The following is a 179-amino-acid chain: Large ribosomal subunit protein uL5 (179 aa).

This sequence belongs to the universal ribosomal protein uL5 family. Part of the 50S ribosomal subunit; part of the 5S rRNA/L5/L18/L25 subcomplex. Contacts the 5S rRNA and the P site tRNA. Forms a bridge to the 30S subunit in the 70S ribosome.

In terms of biological role, this is one of the proteins that bind and probably mediate the attachment of the 5S RNA into the large ribosomal subunit, where it forms part of the central protuberance. In the 70S ribosome it contacts protein S13 of the 30S subunit (bridge B1b), connecting the 2 subunits; this bridge is implicated in subunit movement. Contacts the P site tRNA; the 5S rRNA and some of its associated proteins might help stabilize positioning of ribosome-bound tRNAs. The chain is Large ribosomal subunit protein uL5 from Buchnera aphidicola subsp. Baizongia pistaciae (strain Bp).